The chain runs to 331 residues: MEENEYSGYWEPPRKRCCCARRGTQLMLVGLLSTAMWAGLLALLLLWHWETEKNLKQLGDTAIQNVSHVTKDLQKFQSNQLAQKSQVVQMSQNLQELQAEQKQMKAQDSRLSQNLTGLQEDLRNAQSQNSKLSQNLNRLQDDLVNIKSLGLNEKRTASDSLEKLQEEVAKLWIEILISKGTACNICPKNWLHFQQKCYYFGKGSKQWIQARFACSDLQGRLVSIHSQKEQDFLMQHINKKDSWIGLQDLNMEGEFVWSDGSPVGYSNWNPGEPNNGGQGEDCVMMRGSGQWNDAFCRSYLDAWVCEQLATCEISAPLASVTPTRPTPKSEP.

The Cytoplasmic segment spans residues 1 to 23; the sequence is MEENEYSGYWEPPRKRCCCARRG. Residues Cys-17 and Cys-18 are each lipidated (S-palmitoyl cysteine). The chain crosses the membrane as a helical; Signal-anchor for type II membrane protein span at residues 24 to 49; sequence TQLMLVGLLSTAMWAGLLALLLLWHW. Residues 50–331 are Extracellular-facing; it reads ETEKNLKQLG…PTRPTPKSEP (282 aa). N-linked (GlcNAc...) asparagine glycosylation occurs at Asn-65. Repeats lie at residues 71–91, 92–112, and 113–133; these read KDLQ…VQMS, QNLQ…SRLS, and QNLT…SKLS. The N-linked (GlcNAc...) asparagine glycan is linked to Asn-114. Intrachain disulfides connect Cys-183–Cys-311, Cys-186–Cys-197, Cys-214–Cys-305, and Cys-282–Cys-296. The C-type lectin domain maps to 185–298; it reads ICPKNWLHFQ…GQWNDAFCRS (114 aa). Residues Glu-272, Asn-292, and Asp-293 each coordinate Ca(2+). Ser-319 carries O-linked (Xyl...) (chondroitin sulfate) serine glycosylation.

Homotrimer. Interacts (via C-type lectin domain) with IGHE (via CH3 region); this interaction regulates IgE homeostasis. Interacts (via C-terminus) with CR2/CD21 (via Sushi domain 1 and 2). Post-translationally, N- and O-glycosylated.

Its subcellular location is the cell membrane. The protein resides in the secreted. In terms of biological role, low-affinity receptor for immunoglobulin E (IgE) and CR2/CD21. Has essential roles in the regulation of IgE production and in the differentiation of B cells. On B cells, initiates IgE-dependent antigen uptake and presentation to T cells. On macrophages, upon IgE binding and antigen cross-linking induces intracellular killing of parasites through activation of L-Arginine-nitric oxide pathway. The sequence is that of Low affinity immunoglobulin epsilon Fc receptor (Fcer2) from Mus musculus (Mouse).